We begin with the raw amino-acid sequence, 390 residues long: Succinate--CoA ligase [ADP-forming] subunit beta (390 aa).

Residues 9 to 245 (KHLLKKYNIP…TTQEDEHETM (237 aa)) form the ATP-grasp domain. ATP-binding positions include lysine 46, 53–55 (GRG), glutamate 99, serine 102, and glutamate 107. Mg(2+)-binding residues include asparagine 200 and aspartate 214. Substrate contacts are provided by residues asparagine 265 and 322–324 (GIV).

Belongs to the succinate/malate CoA ligase beta subunit family. As to quaternary structure, heterotetramer of two alpha and two beta subunits. It depends on Mg(2+) as a cofactor.

It catalyses the reaction succinate + ATP + CoA = succinyl-CoA + ADP + phosphate. The catalysed reaction is GTP + succinate + CoA = succinyl-CoA + GDP + phosphate. Its pathway is carbohydrate metabolism; tricarboxylic acid cycle; succinate from succinyl-CoA (ligase route): step 1/1. Its function is as follows. Succinyl-CoA synthetase functions in the citric acid cycle (TCA), coupling the hydrolysis of succinyl-CoA to the synthesis of either ATP or GTP and thus represents the only step of substrate-level phosphorylation in the TCA. The beta subunit provides nucleotide specificity of the enzyme and binds the substrate succinate, while the binding sites for coenzyme A and phosphate are found in the alpha subunit. In Coxiella burnetii (strain RSA 493 / Nine Mile phase I), this protein is Succinate--CoA ligase [ADP-forming] subunit beta.